The sequence spans 476 residues: Lipase (476 aa).

The first 23 residues, Met-1–Ala-23, serve as a signal peptide directing secretion. The active-site Charge relay system is Ser-207. 3 Hemolysin-type calcium-binding repeats span residues Ile-372–Ile-389, Glu-390–Phe-407, and Ser-410–Leu-427. 3 residues coordinate Ca(2+): Asp-437, Asp-440, and Asp-448.

It belongs to the AB hydrolase superfamily. Lipase family.

It catalyses the reaction a triacylglycerol + H2O = a diacylglycerol + a fatty acid + H(+). The sequence is that of Lipase from Pseudomonas fluorescens.